The following is a 192-amino-acid chain: MEPWRPSPRNPMDRIDPNTFRFHFPNLLYASGRKLCYLCFQVETEDYFSCDDSDRGVFRNKVHPWARCHAEQCFLSWFRDQYPYRDEYYNVTWFLSWSPCPTCAEEVVEFLEEYRNLTLSIFTSRLYYFWDPNYQEGLCKLWDAGVQLDIMSCDDFKHCWDNFVDHKGMRFQRRNLLKDYDFLAAELQEILR.

The region spanning 15–141 (IDPNTFRFHF…PNYQEGLCKL (127 aa)) is the CMP/dCMP-type deaminase domain. His-69 is a Zn(2+) binding site. The active-site Proton donor is the Glu-71. Zn(2+) is bound by residues Cys-100 and Cys-103.

The protein belongs to the cytidine and deoxycytidylate deaminase family. As to quaternary structure, (Microbial infection) Interacts with feline foamy virus protein Bet. This interaction does not induce APOBEC3Ca degradation but prevents its dimerization and incorporation into the virion. Zn(2+) serves as cofactor.

Its subcellular location is the nucleus. It localises to the cytoplasm. The enzyme catalyses a 2'-deoxycytidine in single-stranded DNA + H2O + H(+) = a 2'-deoxyuridine in single-stranded DNA + NH4(+). In terms of biological role, DNA deaminase (cytidine deaminase) which acts as an inhibitor of retrovirus replication and retrotransposon mobility via deaminase-dependent and -independent mechanisms. Selectively targets single-stranded DNA and does not deaminate double-stranded DNA or single- or double-stranded RNA. Does not reduce infectivity of foamy feline virus, feline immunodeficiency virus or feline leukemia virus. The chain is DNA dC-&gt;dU-editing enzyme APOBEC-3Ca from Felis catus (Cat).